A 507-amino-acid polypeptide reads, in one-letter code: ATP synthase subunit alpha, chloroplastic (507 aa).

Residue 170–177 (GDRQTGKT) participates in ATP binding.

It belongs to the ATPase alpha/beta chains family. In terms of assembly, F-type ATPases have 2 components, CF(1) - the catalytic core - and CF(0) - the membrane proton channel. CF(1) has five subunits: alpha(3), beta(3), gamma(1), delta(1), epsilon(1). CF(0) has four main subunits: a, b, b' and c.

The protein resides in the plastid. It localises to the chloroplast thylakoid membrane. The enzyme catalyses ATP + H2O + 4 H(+)(in) = ADP + phosphate + 5 H(+)(out). In terms of biological role, produces ATP from ADP in the presence of a proton gradient across the membrane. The alpha chain is a regulatory subunit. This is ATP synthase subunit alpha, chloroplastic from Lemna minor (Common duckweed).